Consider the following 403-residue polypeptide: Acetate kinase (403 aa).

Residue Asn-7 coordinates Mg(2+). Position 14 (Lys-14) interacts with ATP. A substrate-binding site is contributed by Arg-90. Residue Asp-147 is the Proton donor/acceptor of the active site. ATP contacts are provided by residues 207 to 211 (HIGNG), 283 to 285 (DMR), and 331 to 335 (GVGEN). Residue Glu-386 participates in Mg(2+) binding.

Belongs to the acetokinase family. As to quaternary structure, homodimer. Mg(2+) is required as a cofactor. Requires Mn(2+) as cofactor.

The protein resides in the cytoplasm. It catalyses the reaction acetate + ATP = acetyl phosphate + ADP. Its pathway is metabolic intermediate biosynthesis; acetyl-CoA biosynthesis; acetyl-CoA from acetate: step 1/2. Catalyzes the formation of acetyl phosphate from acetate and ATP. Can also catalyze the reverse reaction. Phosphorylates propionate (54%) in addition to acetate (100%). Uses GTP (100%), ITP (163%), UTP (56%), and CTP (21%) as phosphoryl donors in addition to ATP (100%). This Thermotoga maritima (strain ATCC 43589 / DSM 3109 / JCM 10099 / NBRC 100826 / MSB8) protein is Acetate kinase.